The chain runs to 200 residues: Putative peroxiredoxin sll0755 (200 aa).

The region spanning 5 to 163 (LRVGQPAPDF…TLRVLKAIRH (159 aa)) is the Thioredoxin domain. Cys-50 functions as the Cysteine sulfenic acid (-SOH) intermediate in the catalytic mechanism.

It belongs to the peroxiredoxin family. AhpC/Prx1 subfamily. In terms of assembly, homodimer; disulfide-linked, upon oxidation.

The protein localises to the cytoplasm. The catalysed reaction is a hydroperoxide + [thioredoxin]-dithiol = an alcohol + [thioredoxin]-disulfide + H2O. Thiol-specific peroxidase that catalyzes the reduction of hydrogen peroxide and organic hydroperoxides to water and alcohols, respectively. Plays a role in cell protection against oxidative stress by detoxifying peroxides. This is Putative peroxiredoxin sll0755 from Synechocystis sp. (strain ATCC 27184 / PCC 6803 / Kazusa).